A 526-amino-acid polypeptide reads, in one-letter code: MAARKTKHACRIQDKRSDAERQDLDTKLAAVLESRGNANAVFDILEHLESKKEEVVQAAIRTASKLFEVMLEKRELYIGDLPAENGTLPDTYSAEDKYKMWMRHRYNSCAACILDLLQHSSFSNQELALCTLMKFIQLEGKFPLENSEWKDSYRFPRELLKFVIDNLLQEEADCTLLITRFQEYLEYDDVRYYTMTVTNDCVSRVQQKNKLVLPPVFQTNVFCLLSSINIPVEESALGNFLVTKNVNNEDWKPSKLKDHKRVFERVWMIFLKHQLSVSLYKKVLLILHESILPHMSKPTLMIDFLTAAYDVGGAISLLALNGLFILIHQHNLEYPDFYKKLYSLLEPSIFHVKYRARFFHLANMFLSSTHLPVYLVAAFAKRLARLALTAPPQVLLMIIPFICNLIRRHPACRVLIHRPSAGDLATDPYIMEEQDPAKSQALESSLWELEVLQQHYHGDVVRAANVISRPLSAQESDISGLLEISSCELYDKEMKKKKFKSVPLEYEPVRGLLGLKSDITAQHFTF.

A run of 3 helical transmembrane segments spans residues 307-327 (AAYD…FILI), 358-378 (FFHL…LVAA), and 386-406 (LALT…CNLI).

This sequence belongs to the CBF/MAK21 family.

Its subcellular location is the nucleus membrane. It is found in the nucleus. The protein localises to the nucleolus. The sequence is that of Nucleolar complex protein 4 homolog A (noc4l-a) from Xenopus laevis (African clawed frog).